Consider the following 276-residue polypeptide: Formamidopyrimidine-DNA glycosylase (276 aa).

The active-site Schiff-base intermediate with DNA is the Pro2. Glu3 (proton donor) is an active-site residue. Lys60 acts as the Proton donor; for beta-elimination activity in catalysis. DNA-binding residues include Arg113 and Arg152. The segment at 241–275 (NVFRKTGHPCPRCGHLIEKLIVAQRSTHICPICQK) adopts an FPG-type zinc-finger fold. Residue Arg265 is the Proton donor; for delta-elimination activity of the active site.

The protein belongs to the FPG family. As to quaternary structure, monomer. Zn(2+) serves as cofactor.

It catalyses the reaction Hydrolysis of DNA containing ring-opened 7-methylguanine residues, releasing 2,6-diamino-4-hydroxy-5-(N-methyl)formamidopyrimidine.. It carries out the reaction 2'-deoxyribonucleotide-(2'-deoxyribose 5'-phosphate)-2'-deoxyribonucleotide-DNA = a 3'-end 2'-deoxyribonucleotide-(2,3-dehydro-2,3-deoxyribose 5'-phosphate)-DNA + a 5'-end 5'-phospho-2'-deoxyribonucleoside-DNA + H(+). Functionally, involved in base excision repair of DNA damaged by oxidation or by mutagenic agents. Acts as a DNA glycosylase that recognizes and removes damaged bases. Has a preference for oxidized purines, such as 7,8-dihydro-8-oxoguanine (8-oxoG). Has AP (apurinic/apyrimidinic) lyase activity and introduces nicks in the DNA strand. Cleaves the DNA backbone by beta-delta elimination to generate a single-strand break at the site of the removed base with both 3'- and 5'-phosphates. This Protochlamydia amoebophila (strain UWE25) protein is Formamidopyrimidine-DNA glycosylase.